Reading from the N-terminus, the 170-residue chain is Photosystem I assembly protein Ycf3 (170 aa).

TPR repeat units follow at residues alanine 35–proline 68, serine 72–leucine 105, and glycine 120–asparagine 153.

This sequence belongs to the Ycf3 family.

Its subcellular location is the plastid. It is found in the chloroplast thylakoid membrane. Essential for the assembly of the photosystem I (PSI) complex. May act as a chaperone-like factor to guide the assembly of the PSI subunits. The protein is Photosystem I assembly protein Ycf3 of Triticum aestivum (Wheat).